Reading from the N-terminus, the 206-residue chain is Geminin (206 aa).

Positions methionine 1–asparagine 18 are enriched in polar residues. The interval methionine 1–asparagine 42 is disordered. Lysine 27 bears the N6-acetyllysine mark. A phosphoserine mark is found at serine 36, serine 63, and serine 64. Residues threonine 79 to glutamate 158 form a necessary and sufficient for interaction with IDAS and CDT1 region. Positions proline 91–valine 141 form a coiled coil. Positions asparagine 157 to threonine 206 are disordered. Acidic residues predominate over residues aspartate 167 to aspartate 185. Positions aspartate 167–glycine 187 are homeodomain binding. Serine 181 bears the Phosphoserine; by CK2 mark. The span at threonine 195–threonine 206 shows a compositional bias: polar residues.

It belongs to the geminin family. As to quaternary structure, homotetramer. Interacts with CDT1; this inhibits binding of the MCM complex to origins of replication. The complex with CDT1 exists in two forms, a 'permissive' heterotrimer and an 'inhibitory' heterohexamer. Interacts (via coiled-coil domain) with IDAS (via coiled-coil domain); this targets GMNN to the nucleus. The heterodimer formed by GMNN and MCIDAS has much lower affinity for CDT1 than the GMNN homodimer. Interacts with a subset of Hox proteins, affinity increasing from anterior to posterior types, the strongest interaction being with HOXB1, HOXC9 and HOXD10. Interacts with LRWD1 from G1/S to mitosis. Phosphorylated during mitosis. Phosphorylation at Ser-181 by CK2 results in enhanced binding to Hox proteins and more potent inhibitory effect on Hox transcriptional activity.

The protein localises to the cytoplasm. It is found in the nucleus. Inhibits DNA replication by preventing the incorporation of MCM complex into pre-replication complex (pre-RC). It is degraded during the mitotic phase of the cell cycle. Its destruction at the metaphase-anaphase transition permits replication in the succeeding cell cycle. Inhibits histone acetyltransferase activity of KAT7/HBO1 in a CDT1-dependent manner, inhibiting histone H4 acetylation and DNA replication licensing. Inhibits the transcriptional activity of a subset of Hox proteins, enrolling them in cell proliferative control. The protein is Geminin (Gmnn) of Mus musculus (Mouse).